The chain runs to 342 residues: UDP-N-acetylenolpyruvoylglucosamine reductase (342 aa).

The FAD-binding PCMH-type domain maps to 13–183 (IDHNAQHIVC…VAVGLRLPKE (171 aa)). The active site involves Arg159. A substrate-binding site is contributed by Tyr190. Ser229 functions as the Proton donor in the catalytic mechanism. Glu325 is a catalytic residue.

This sequence belongs to the MurB family. In terms of assembly, monomer. Requires FAD as cofactor.

It is found in the cytoplasm. It catalyses the reaction UDP-N-acetyl-alpha-D-muramate + NADP(+) = UDP-N-acetyl-3-O-(1-carboxyvinyl)-alpha-D-glucosamine + NADPH + H(+). It functions in the pathway cell wall biogenesis; peptidoglycan biosynthesis. In terms of biological role, cell wall formation. The protein is UDP-N-acetylenolpyruvoylglucosamine reductase of Escherichia coli O157:H7.